The following is a 240-amino-acid chain: Small ribosomal subunit protein uS2 (240 aa).

The protein belongs to the universal ribosomal protein uS2 family.

The polypeptide is Small ribosomal subunit protein uS2 (Haemophilus influenzae (strain 86-028NP)).